Consider the following 425-residue polypeptide: Protein CLP1 homolog (425 aa).

ATP is bound by residues Glu-18, Lys-59, and 121–126; that span reads DVGKST.

Belongs to the Clp1 family. Clp1 subfamily.

The protein resides in the nucleus. Functionally, required for endonucleolytic cleavage during polyadenylation-dependent pre-mRNA 3'-end formation. This is Protein CLP1 homolog (cbc) from Drosophila mojavensis (Fruit fly).